The following is a 338-amino-acid chain: Heat-inducible transcription repressor HrcA (338 aa).

The protein belongs to the HrcA family.

Functionally, negative regulator of class I heat shock genes (grpE-dnaK-dnaJ and groELS operons). Prevents heat-shock induction of these operons. In Bacillus cereus (strain 03BB102), this protein is Heat-inducible transcription repressor HrcA.